We begin with the raw amino-acid sequence, 352 residues long: Protein-glutamate methylesterase/protein-glutamine glutaminase 2 (352 aa).

The Response regulatory domain occupies 1–116; sequence MIVDDSAIVR…KDFIQDAASD (116 aa). Aspartate 50 carries the 4-aspartylphosphate modification. The CheB-type methylesterase domain maps to 159–351; it reads SKTTEHVVAI…QEIMRYAHLK (193 aa). Catalysis depends on residues serine 171, histidine 197, and aspartate 293.

This sequence belongs to the CheB family. Post-translationally, phosphorylated by CheA. Phosphorylation of the N-terminal regulatory domain activates the methylesterase activity.

It localises to the cytoplasm. The catalysed reaction is [protein]-L-glutamate 5-O-methyl ester + H2O = L-glutamyl-[protein] + methanol + H(+). It catalyses the reaction L-glutaminyl-[protein] + H2O = L-glutamyl-[protein] + NH4(+). Involved in chemotaxis. Part of a chemotaxis signal transduction system that modulates chemotaxis in response to various stimuli. Catalyzes the demethylation of specific methylglutamate residues introduced into the chemoreceptors (methyl-accepting chemotaxis proteins or MCP) by CheR. Also mediates the irreversible deamidation of specific glutamine residues to glutamic acid. The chain is Protein-glutamate methylesterase/protein-glutamine glutaminase 2 from Shewanella denitrificans (strain OS217 / ATCC BAA-1090 / DSM 15013).